The primary structure comprises 178 residues: MSATPEKADDLIVVGKIFSVHGVRGEVKVFSFTDPIENLLGYRNWTLRREGVVKQVELVSGRSTQKDLVVKLKGLDDRDEARLLSGYEICIPRSLLPDLTADEYYWYQLEGLSVINQDEQLFGKVDHLLETGANDVLVVKPCVGSLDDRERLLPYTEQCVLAIDLEAGVMRVEWDADF.

One can recognise a PRC barrel domain in the interval 101–178 (ADEYYWYQLE…VMRVEWDADF (78 aa)).

The protein belongs to the RimM family. In terms of assembly, binds ribosomal protein uS19.

It localises to the cytoplasm. Its function is as follows. An accessory protein needed during the final step in the assembly of 30S ribosomal subunit, possibly for assembly of the head region. Essential for efficient processing of 16S rRNA. May be needed both before and after RbfA during the maturation of 16S rRNA. It has affinity for free ribosomal 30S subunits but not for 70S ribosomes. This chain is Ribosome maturation factor RimM, found in Pseudomonas fluorescens (strain Pf0-1).